Reading from the N-terminus, the 596-residue chain is MRYKPLLLALMLVFSTPAVAAHDAAHNRSAEVKKQTKNKKEQPEAAEGKKEKGKNGAVKDKKTGGKEAAKEGKESKKTAKNRKEAEKEATSRQSARKGREGDKKSKAEHKKAHGKPVSGSKEKNAKTQPENKQGKKEAKGQGNPRKGGKAEKDTVSANKKVRSDKNGKAVKQDKKYREEKNAKTDSDELKAAVAAATNDVENKKALLKQSEGMLLHVSNSLKQLQEERIRQERIRQARGNLASVNRKQREAWDKFQKLNTELNRLKTEVAATKAQISRFVSGNYKNSQPNAVALFLKNAEPGQKNRFLRYTRYVNASNREVVKDLEKQQKALAVQEQKINNELARLKKIQANVQSLLKKQGVTDAAEQTESRRQNAKIAKDARKLLEQKGNEQQLNKLLSNLEKKKAEHRIQDAEAKRKLAEARLAAAEKARKEAAQQKAEARRAEMSNLTAEDRNIQAPSVMGIGSADGFSRMQGRLKKPVDGVPTGLFGQNRSGGDIWKGVFYSTAPATVESIAPGTVSYADELDGYGKVVVVDHGENYISIYAGLSEISVGKGYMVAAGSKIGSSGSLPDGEEGLYLQIRYQGQVLNPSSWIR.

The signal sequence occupies residues 1-20; sequence MRYKPLLLALMLVFSTPAVA. 2 stretches are compositionally biased toward basic and acidic residues: residues 25-90 and 161-184; these read AHNR…KEAT and VRSD…NAKT. Positions 25 to 184 are disordered; the sequence is AHNRSAEVKK…KYREEKNAKT (160 aa). Coiled-coil stretches lie at residues 177–281 and 318–454; these read REEK…RFVS and NREV…TAED.

This sequence belongs to the peptidase M23B family.

This is an uncharacterized protein from Neisseria meningitidis serogroup B (strain ATCC BAA-335 / MC58).